Consider the following 187-residue polypeptide: Elongation factor P (187 aa).

It belongs to the elongation factor P family.

The protein localises to the cytoplasm. The protein operates within protein biosynthesis; polypeptide chain elongation. Functionally, involved in peptide bond synthesis. Stimulates efficient translation and peptide-bond synthesis on native or reconstituted 70S ribosomes in vitro. Probably functions indirectly by altering the affinity of the ribosome for aminoacyl-tRNA, thus increasing their reactivity as acceptors for peptidyl transferase. This is Elongation factor P (efp) from Synechocystis sp. (strain ATCC 27184 / PCC 6803 / Kazusa).